Reading from the N-terminus, the 163-residue chain is Globin CTT-Z (163 aa).

An N-terminal signal peptide occupies residues 1–16 (MKFFAVLALCIVGAIA). In terms of domain architecture, Globin spans 18–162 (PLTSDEAALV…VYTAVFQIVT (145 aa)). Heme b contacts are provided by His-76 and His-111.

Belongs to the globin family.

This chain is Globin CTT-Z (CTT-Z), found in Chironomus thummi thummi (Midge).